Here is a 773-residue protein sequence, read N- to C-terminus: Mitogen-activated protein kinase kinase kinase 9 (773 aa).

The span at 1–14 (MKKSSDKSPVRQHD) shows a compositional bias: basic and acidic residues. Residues 1 to 35 (MKKSSDKSPVRQHDTATQINSDAVSSSTSFTDSDS) are disordered. The span at 21 to 35 (SDAVSSSTSFTDSDS) shows a compositional bias: low complexity. Residues Ser-79 and Ser-150 each carry the phosphoserine modification. Residues 100-493 (FDKILALMKK…VSNTSPICVS (394 aa)) form a regulatory region region. Phosphoserine; by MAPK4 is present on Ser-365. A disordered region spans residues 426–455 (EIVRRPSSSSSSENGCDEEEAEDDKVEKEE). The span at 440–449 (GCDEEEAEDD) shows a compositional bias: acidic residues. Residues 501–755 (WQKGQLLRQG…ATELLNHPFV (255 aa)) form the Protein kinase domain. Residues 507–515 (LRQGSFGSV) and Lys-529 contribute to the ATP site. The Proton acceptor role is filled by Asp-624. Ser-768 bears the Phosphoserine mark.

The protein belongs to the protein kinase superfamily. STE Ser/Thr protein kinase family. MAP kinase kinase kinase subfamily. Interacts with MPK4. Phosphorylated by MPK4 upon treatment with flg22. In terms of tissue distribution, expressed at least in rosette leaves (at protein level).

It carries out the reaction L-seryl-[protein] + ATP = O-phospho-L-seryl-[protein] + ADP + H(+). The enzyme catalyses L-threonyl-[protein] + ATP = O-phospho-L-threonyl-[protein] + ADP + H(+). Functionally, triggers SUMM2-mediated immune responses, including cell death and defense responses. Probably inhibited by the MEKK1-MKK1/ MKK2-MPK4 kinase cascade to adjust plant defense. Seems to contribute in transducing external glutamate (L-Glu) signal that elicits large-scale changes in root architecture. This chain is Mitogen-activated protein kinase kinase kinase 9, found in Arabidopsis thaliana (Mouse-ear cress).